A 236-amino-acid polypeptide reads, in one-letter code: 5'-methylthioadenosine/S-adenosylhomocysteine nucleosidase (236 aa).

Catalysis depends on Glu-12, which acts as the Proton acceptor. Substrate-binding positions include Gly-78, Met-153, and 174–175 (ME). The active-site Proton donor is the Asp-198.

This sequence belongs to the PNP/UDP phosphorylase family. MtnN subfamily.

It catalyses the reaction S-adenosyl-L-homocysteine + H2O = S-(5-deoxy-D-ribos-5-yl)-L-homocysteine + adenine. It carries out the reaction S-methyl-5'-thioadenosine + H2O = 5-(methylsulfanyl)-D-ribose + adenine. The catalysed reaction is 5'-deoxyadenosine + H2O = 5-deoxy-D-ribose + adenine. It participates in amino-acid biosynthesis; L-methionine biosynthesis via salvage pathway; S-methyl-5-thio-alpha-D-ribose 1-phosphate from S-methyl-5'-thioadenosine (hydrolase route): step 1/2. In terms of biological role, catalyzes the irreversible cleavage of the glycosidic bond in both 5'-methylthioadenosine (MTA) and S-adenosylhomocysteine (SAH/AdoHcy) to adenine and the corresponding thioribose, 5'-methylthioribose and S-ribosylhomocysteine, respectively. Also cleaves 5'-deoxyadenosine, a toxic by-product of radical S-adenosylmethionine (SAM) enzymes, into 5-deoxyribose and adenine. In Geobacillus thermodenitrificans (strain NG80-2), this protein is 5'-methylthioadenosine/S-adenosylhomocysteine nucleosidase.